We begin with the raw amino-acid sequence, 101 residues long: uncharacterized protein (101 aa).

Transmembrane regions (helical) follow at residues 10–30 and 67–87; these read VLAI…IGSI and IILG…ILSI.

It localises to the membrane. This is an uncharacterized protein from Acanthamoeba polyphaga (Amoeba).